Reading from the N-terminus, the 168-residue chain is Thioredoxin Y, chloroplastic (168 aa).

A chloroplast-targeting transit peptide spans 1-58 (MAAFTSTTTAAAASPTPCRPAALVARSSAAPLRSAAPVVVAAGLRRAAAPSRRGATLR). The region spanning 59–165 (VQAKKQTFSS…LIQQIESALE (107 aa)) is the Thioredoxin domain. Active-site nucleophile residues include cysteine 89 and cysteine 92. An intrachain disulfide couples cysteine 89 to cysteine 92.

Belongs to the thioredoxin family. Plant Y-type subfamily.

The protein resides in the plastid. It is found in the chloroplast. In terms of biological role, probable thiol-disulfide oxidoreductase that may participate in various redox reactions. In Oryza sativa subsp. japonica (Rice), this protein is Thioredoxin Y, chloroplastic.